The following is a 37-amino-acid chain: Photosystem II reaction center protein K (37 aa).

Over 1–15 (KLPEAYAIFDPLVDV) the chain is Lumenal. The helical transmembrane segment at 16–30 (LPVIPVLFFALAFVV) threads the bilayer. At 31 to 37 (QAAVGFR) the chain is on the cytoplasmic side.

Belongs to the PsbK family. In terms of assembly, PSII is composed of 1 copy each of membrane proteins PsbA, PsbB, PsbC, PsbD, PsbE, PsbF, PsbH, PsbI, PsbJ, PsbK, PsbL, PsbM, PsbT, PsbX, PsbY, PsbZ, Psb30/Ycf12, peripheral proteins PsbO, CyanoQ (PsbQ), PsbU, PsbV and a large number of cofactors. It forms dimeric complexes. PSII binds multiple chlorophylls, carotenoids and specific lipids. serves as cofactor.

The protein localises to the cellular thylakoid membrane. In terms of biological role, one of the components of the core complex of photosystem II (PSII). PSII is a light-driven water:plastoquinone oxidoreductase that uses light energy to abstract electrons from H(2)O, generating O(2) and a proton gradient subsequently used for ATP formation. It consists of a core antenna complex that captures photons, and an electron transfer chain that converts photonic excitation into a charge separation. The polypeptide is Photosystem II reaction center protein K (Thermostichus vulcanus (Synechococcus vulcanus)).